Reading from the N-terminus, the 258-residue chain is HLA class II histocompatibility antigen, DP beta 1 chain (258 aa).

The N-terminal stretch at 1 to 29 is a signal peptide; the sequence is MMVLQVSAAPRTVALTALLMVLLTSVVQG. Residues 30 to 121 form a beta-1 region; the sequence is RATPENYLFQ…LGGPMTLQRR (92 aa). Residues 30–225 lie on the Extracellular side of the membrane; sequence RATPENYLFQ…KAQSDSARSK (196 aa). 2 cysteine pairs are disulfide-bonded: cysteine 44–cysteine 106 and cysteine 144–cysteine 200. N-linked (GlcNAc...) asparagine glycosylation occurs at asparagine 48. Residues 122-215 are beta-2; it reads VQPRVNVSPS…SLDSPVTVEW (94 aa). An Ig-like C1-type domain is found at 124 to 212; it reads PRVNVSPSKK…EHTSLDSPVT (89 aa). Residues 216-225 form a connecting peptide region; it reads KAQSDSARSK. The helical transmembrane segment at 226–246 threads the bilayer; the sequence is TLTGAGGFVLGLIICGVGIFM. Topologically, residues 247 to 258 are cytoplasmic; it reads HRRSKKVQRGSA.

It belongs to the MHC class II family. As to quaternary structure, heterodimer of an alpha and a beta subunit; also referred as MHC class II molecule. In the endoplasmic reticulum (ER) it forms a heterononamer; 3 MHC class II molecules bind to a CD74 homotrimer (also known as invariant chain or HLA class II histocompatibility antigen gamma chain). In the endosomal/lysosomal system; CD74 undergoes sequential degradation by various proteases; leaving a small fragment termed CLIP on each MHC class II molecule. MHC class II molecule interacts with HLA_DM, and HLA_DO in B-cells, in order to release CLIP and facilitate the binding of antigenic peptides.

The protein localises to the cell membrane. It is found in the endoplasmic reticulum membrane. The protein resides in the golgi apparatus. Its subcellular location is the trans-Golgi network membrane. It localises to the endosome membrane. The protein localises to the lysosome membrane. Its function is as follows. Binds peptides derived from antigens that access the endocytic route of antigen presenting cells (APC) and presents them on the cell surface for recognition by the CD4 T-cells. The peptide binding cleft accommodates peptides of 10-30 residues. The peptides presented by MHC class II molecules are generated mostly by degradation of proteins that access the endocytic route, where they are processed by lysosomal proteases and other hydrolases. Exogenous antigens that have been endocytosed by the APC are thus readily available for presentation via MHC II molecules, and for this reason this antigen presentation pathway is usually referred to as exogenous. As membrane proteins on their way to degradation in lysosomes as part of their normal turn-over are also contained in the endosomal/lysosomal compartments, exogenous antigens must compete with those derived from endogenous components. Autophagy is also a source of endogenous peptides, autophagosomes constitutively fuse with MHC class II loading compartments. In addition to APCs, other cells of the gastrointestinal tract, such as epithelial cells, express MHC class II molecules and CD74 and act as APCs, which is an unusual trait of the GI tract. To produce a MHC class II molecule that presents an antigen, three MHC class II molecules (heterodimers of an alpha and a beta chain) associate with a CD74 trimer in the ER to form a heterononamer. Soon after the entry of this complex into the endosomal/lysosomal system where antigen processing occurs, CD74 undergoes a sequential degradation by various proteases, including CTSS and CTSL, leaving a small fragment termed CLIP (class-II-associated invariant chain peptide). The removal of CLIP is facilitated by HLA-DM via direct binding to the alpha-beta-CLIP complex so that CLIP is released. HLA-DM stabilizes MHC class II molecules until primary high affinity antigenic peptides are bound. The MHC II molecule bound to a peptide is then transported to the cell membrane surface. In B-cells, the interaction between HLA-DM and MHC class II molecules is regulated by HLA-DO. Primary dendritic cells (DCs) also to express HLA-DO. Lysosomal microenvironment has been implicated in the regulation of antigen loading into MHC II molecules, increased acidification produces increased proteolysis and efficient peptide loading. This Homo sapiens (Human) protein is HLA class II histocompatibility antigen, DP beta 1 chain (HLA-DPB1).